A 351-amino-acid chain; its full sequence is Phospho-N-acetylmuramoyl-pentapeptide-transferase (351 aa).

Transmembrane regions (helical) follow at residues Thr17–Leu37, Ile63–Ile83, Leu85–Phe105, Ile135–Phe155, Ser158–Ala178, Gly190–Thr210, Leu230–Tyr250, Ile254–Ile274, Ile279–Val299, and Gln328–Leu348.

It belongs to the glycosyltransferase 4 family. MraY subfamily. Requires Mg(2+) as cofactor.

It localises to the cell inner membrane. It catalyses the reaction UDP-N-acetyl-alpha-D-muramoyl-L-alanyl-gamma-D-glutamyl-meso-2,6-diaminopimeloyl-D-alanyl-D-alanine + di-trans,octa-cis-undecaprenyl phosphate = di-trans,octa-cis-undecaprenyl diphospho-N-acetyl-alpha-D-muramoyl-L-alanyl-D-glutamyl-meso-2,6-diaminopimeloyl-D-alanyl-D-alanine + UMP. It participates in cell wall biogenesis; peptidoglycan biosynthesis. In terms of biological role, catalyzes the initial step of the lipid cycle reactions in the biosynthesis of the cell wall peptidoglycan: transfers peptidoglycan precursor phospho-MurNAc-pentapeptide from UDP-MurNAc-pentapeptide onto the lipid carrier undecaprenyl phosphate, yielding undecaprenyl-pyrophosphoryl-MurNAc-pentapeptide, known as lipid I. The sequence is that of Phospho-N-acetylmuramoyl-pentapeptide-transferase from Borrelia hermsii (strain HS1 / DAH).